A 222-amino-acid chain; its full sequence is MLDQIKNSLIVSCQALPDEPLHSSFIMSKMALAAKQGGAKGIRANTKEDIIQIKEEVNLPVVGIVKRDYKDSEVFITATYKEIDELLESNCEMIAIDATTRNRPQDIKLQDLVDYTKRLNSEVELMADIATLEEAKIAEKLGFDCISTTLHGYTSNTSNHKIYDNDFSFLKNLLSEVKIPIIAEGNILTPEMFKRCIELGAHACVVGGAITRPQEITKRFIG.

Belongs to the NanE family.

The catalysed reaction is an N-acyl-D-glucosamine 6-phosphate = an N-acyl-D-mannosamine 6-phosphate. The protein operates within amino-sugar metabolism; N-acetylneuraminate degradation; D-fructose 6-phosphate from N-acetylneuraminate: step 3/5. Converts N-acetylmannosamine-6-phosphate (ManNAc-6-P) to N-acetylglucosamine-6-phosphate (GlcNAc-6-P). The protein is Putative N-acetylmannosamine-6-phosphate 2-epimerase of Oceanobacillus iheyensis (strain DSM 14371 / CIP 107618 / JCM 11309 / KCTC 3954 / HTE831).